Here is a 76-residue protein sequence, read N- to C-terminus: Theta defensin subunit C (76 aa).

The signal sequence occupies residues 1-22 (MRTFAFLTAMLLLVALHAQAEA). The propeptide occupies 23-64 (RQARADEAAIQEQPGADDQGMAHSFTRNESAVLPLSESERGL). Arginine 65 is covalently cross-linked (Cyclopeptide (Arg-Cys) (interchain with C-73 in subunit A); in form BTD-4). An intrachain disulfide couples cysteine 68 to cysteine 73. Cysteine 73 participates in a covalent cross-link: Cyclopeptide (Cys-Arg) (interchain with R-65 in subunit A); in form BTD-4. Positions 74-76 (RLL) are excised as a propeptide.

This sequence belongs to the alpha-defensin family. Theta subfamily. BTD-4 is a cyclic heterodimer composed of subunits A and C; disulfide-linked. In terms of processing, forms a cyclic peptide with subunit A (BTD-4). An additional intersubunit disulfide bond is formed.

Its function is as follows. BTD-4 has antimicrobial activity against the Gram-negative bacterium E.coli ML35, the Gram-positive bacterium S.aureus 502a, and the fungus C.albicans 16820. The protein is Theta defensin subunit C (BTDC) of Papio anubis (Olive baboon).